The primary structure comprises 368 residues: Homoserine O-acetyltransferase (368 aa).

The AB hydrolase-1 domain maps to 47-349 (NAILICHALS…SGEGHDSFLL (303 aa)). Serine 153 (nucleophile) is an active-site residue. Arginine 221 contributes to the substrate binding site. Catalysis depends on residues aspartate 311 and histidine 344. Aspartate 345 contributes to the substrate binding site.

Belongs to the AB hydrolase superfamily. MetX family. As to quaternary structure, homodimer.

The protein resides in the cytoplasm. It catalyses the reaction L-homoserine + acetyl-CoA = O-acetyl-L-homoserine + CoA. Its pathway is amino-acid biosynthesis; L-methionine biosynthesis via de novo pathway; O-acetyl-L-homoserine from L-homoserine: step 1/1. Functionally, transfers an acetyl group from acetyl-CoA to L-homoserine, forming acetyl-L-homoserine. In Leptospira borgpetersenii serovar Hardjo-bovis (strain JB197), this protein is Homoserine O-acetyltransferase.